Reading from the N-terminus, the 434-residue chain is Arrestin domain-containing protein 1 (434 aa).

A disordered region spans residues 292 to 349 (SPCPGRESSPGTLSLVVPSAPPQEEAEAVASGPHFSDPVSLSTKSHSQQQPLSAPLGS). A compositionally biased stretch (polar residues) spans 330 to 343 (VSLSTKSHSQQQPL). 2 short sequence motifs (PPxY motif) span residues 401–404 (PPEY) and 414–417 (PPSY).

It belongs to the arrestin family. Interacts (via PPxY motifs) with ITCH (via WW domains); the interaction is direct and participates in the recruitment of the ubiquitin-protein ligase ITCH to the NOTCH1 receptor. Interacts with ARRB1 and ARRB2; the interaction is direct. Interacts with TSG101; may recruit TSG101 to the plasma membrane. Interacts (via PPxY motifs) with WWP2 (via WW domains); ubiquitinates ARRDC1. Interacts with SLC11A2; controls the incorporation of SLC11A2 into extracellular vesicles through an ubiquitination-dependent mechanism. Interacts with WWP1 (via WW domains). Interacts with NEDD4 (via WW domains). Interacts with PDCD6IP. In terms of processing, ubiquitinated. Ubiquitination by WWP2; promotes localization to extracellular microvesicles. Ubiquitinated by WWP1.

Its subcellular location is the cell membrane. Its function is as follows. Functions as an adapter recruiting ubiquitin-protein ligases to their specific substrates. Through an ubiquitination-dependent mechanism plays for instance a role in the incorporation of SLC11A2 into extracellular vesicles. More generally, plays a role in the extracellular transport of proteins between cells through the release in the extracellular space of microvesicles. By participating to the ITCH-mediated ubiquitination and subsequent degradation of NOTCH1, negatively regulates the NOTCH signaling pathway. This Mus musculus (Mouse) protein is Arrestin domain-containing protein 1.